Here is a 592-residue protein sequence, read N- to C-terminus: Putative D-/L-hydantoinase subunit B (592 aa).

It belongs to the HyuB family. In terms of assembly, may form a complex with HyuA.

Functionally, involved in the asymmetric conversion of racemic 5-substituted hydantoins to the corresponding L-amino acids. HyuA and HyuB are both required for the conversion of D- and L-5-substituted hydantoins to corresponding N-carbamoyl-D- and N-carbamoyl-L-amino acids, respectively. The polypeptide is Putative D-/L-hydantoinase subunit B (Pseudomonas sp. (strain NS671)).